The primary structure comprises 83 residues: Conotoxin Im22.1 (83 aa).

The signal sequence occupies residues 1–18; sequence MMMRVFIAMFFLLALVEA. Residues 19–26 constitute a propeptide that is removed on maturation; that stretch reads GWPRLYDK.

The protein belongs to the conotoxin E superfamily. Contain 4 disulfide bonds. Expressed by the venom duct.

The protein localises to the secreted. Probable neurotoxin. This chain is Conotoxin Im22.1, found in Conus imperialis (Imperial cone).